A 951-amino-acid chain; its full sequence is Cation channel sperm-associated auxiliary subunit epsilon (951 aa).

A signal peptide spans 1 to 19 (MSAREVAVLLLWLSCYGSA). Residues 20–903 (LWRYSTNSPN…ETFGLIPSPS (884 aa)) lie on the Extracellular side of the membrane. Intrachain disulfides connect cysteine 57–cysteine 71, cysteine 101–cysteine 206, cysteine 246–cysteine 336, and cysteine 410–cysteine 413. Residues asparagine 61 and asparagine 114 are each glycosylated (N-linked (GlcNAc...) asparagine). Residues asparagine 414, asparagine 472, asparagine 487, asparagine 493, and asparagine 535 are each glycosylated (N-linked (GlcNAc...) asparagine). Disulfide bonds link cysteine 583-cysteine 690, cysteine 703-cysteine 885, cysteine 719-cysteine 752, and cysteine 804-cysteine 835. Asparagine 796 carries an N-linked (GlcNAc...) asparagine glycan. N-linked (GlcNAc...) asparagine glycans are attached at residues asparagine 854, asparagine 881, and asparagine 886. Residues 904–924 (VYLVASFLFVLMLLFFTILVL) traverse the membrane as a helical segment. The Cytoplasmic portion of the chain corresponds to 925-951 (SYFRYMRIYRRYIYEPLHKPQRKRKKN).

The protein belongs to the CATSPERD family. Component of the CatSper complex or CatSpermasome composed of the core pore-forming members CATSPER1, CATSPER2, CATSPER3 and CATSPER4 as well as auxiliary members CATSPERB, CATSPERG, CATSPERD, CATSPERE, CATSPERZ, C2CD6/CATSPERT, TMEM249, TMEM262 and EFCAB9. HSPA1 may be an additional auxiliary complex member. The core complex members CATSPER1, CATSPER2, CATSPER3 and CATSPER4 form a heterotetrameric channel. The auxiliary CATSPERB, CATSPERG, CATSPERD and CATSPERE subunits form a pavilion-like structure over the pore which stabilizes the complex through interactions with CATSPER4, CATSPER3, CATSPER1 and CATSPER2 respectively. TMEM262/CATSPERH interacts with CATSPERB, further stabilizing the complex. C2CD6/CATSPERT interacts at least with CATSPERD and is required for targeting the CatSper complex in the flagellar membrane.

Its subcellular location is the cell projection. It localises to the cilium. The protein resides in the flagellum membrane. Functionally, auxiliary component of the CatSper complex, a complex involved in sperm cell hyperactivation. Sperm cell hyperactivation is needed for sperm motility which is essential late in the preparation of sperm for fertilization. The protein is Cation channel sperm-associated auxiliary subunit epsilon of Homo sapiens (Human).